A 1183-amino-acid chain; its full sequence is DNA-directed RNA polymerase subunit beta (1183 aa).

The protein belongs to the RNA polymerase beta chain family. The RNAP catalytic core consists of 2 alpha, 1 beta, 1 beta' and 1 omega subunit. When a sigma factor is associated with the core the holoenzyme is formed, which can initiate transcription.

The catalysed reaction is RNA(n) + a ribonucleoside 5'-triphosphate = RNA(n+1) + diphosphate. DNA-dependent RNA polymerase catalyzes the transcription of DNA into RNA using the four ribonucleoside triphosphates as substrates. The polypeptide is DNA-directed RNA polymerase subunit beta (Staphylococcus aureus (strain MRSA252)).